The chain runs to 258 residues: Serine protease VLSP-3 (258 aa).

An N-terminal signal peptide occupies residues 1–18 (MVLIRVLANLLVLQLSYA). Positions 19-24 (QKSSEL) are excised as a propeptide. A Peptidase S1 domain is found at 25 to 249 (VIGGDECNIN…YTDWIQSIIA (225 aa)). 6 cysteine pairs are disulfide-bonded: Cys31/Cys163, Cys50/Cys66, Cys98/Cys256, Cys142/Cys210, Cys174/Cys189, and Cys200/Cys225. N-linked (GlcNAc...) asparagine glycosylation occurs at Asn44. His65 (charge relay system) is an active-site residue. 2 N-linked (GlcNAc...) asparagine glycosylation sites follow: Asn79 and Asn103. Asp110 acts as the Charge relay system in catalysis. 2 N-linked (GlcNAc...) asparagine glycosylation sites follow: Asn154 and Asn170. The active-site Charge relay system is the Ser204. Asn251 carries an N-linked (GlcNAc...) asparagine glycan.

Belongs to the peptidase S1 family. Snake venom subfamily. As to quaternary structure, monomer. Expressed by the venom gland.

The protein resides in the secreted. Snake venom serine protease that may act in the hemostasis system of the prey. This is Serine protease VLSP-3 from Macrovipera lebetinus (Levantine viper).